The following is a 538-amino-acid chain: Putative cysteine ligase BshC (538 aa).

A coiled-coil region spans residues 460–484; sequence KINEQIELLERMLKRNVEKKHEVEL.

The protein belongs to the BshC family.

In terms of biological role, involved in bacillithiol (BSH) biosynthesis. May catalyze the last step of the pathway, the addition of cysteine to glucosamine malate (GlcN-Mal) to generate BSH. This is Putative cysteine ligase BshC from Bacillus thuringiensis subsp. konkukian (strain 97-27).